Consider the following 325-residue polypeptide: Holliday junction branch migration complex subunit RuvB (325 aa).

Residues 1–180 (MKNQLLDAKV…FGIHLKLNFY (180 aa)) form a large ATPase domain (RuvB-L) region. Residues L19, R20, G61, K64, T65, S66, 127–129 (EDF), R170, Y180, and R217 each bind ATP. T65 contacts Mg(2+). A small ATPAse domain (RuvB-S) region spans residues 181–251 (SCEELTQIVE…ITDYALNQLG (71 aa)). The tract at residues 254-325 (KLGLDSSDHK…ITANALKHLH (72 aa)) is head domain (RuvB-H). Positions 290, 309, and 314 each coordinate DNA.

Belongs to the RuvB family. As to quaternary structure, homohexamer. Forms an RuvA(8)-RuvB(12)-Holliday junction (HJ) complex. HJ DNA is sandwiched between 2 RuvA tetramers; dsDNA enters through RuvA and exits via RuvB. An RuvB hexamer assembles on each DNA strand where it exits the tetramer. Each RuvB hexamer is contacted by two RuvA subunits (via domain III) on 2 adjacent RuvB subunits; this complex drives branch migration. In the full resolvosome a probable DNA-RuvA(4)-RuvB(12)-RuvC(2) complex forms which resolves the HJ.

It is found in the cytoplasm. It catalyses the reaction ATP + H2O = ADP + phosphate + H(+). Functionally, the RuvA-RuvB-RuvC complex processes Holliday junction (HJ) DNA during genetic recombination and DNA repair, while the RuvA-RuvB complex plays an important role in the rescue of blocked DNA replication forks via replication fork reversal (RFR). RuvA specifically binds to HJ cruciform DNA, conferring on it an open structure. The RuvB hexamer acts as an ATP-dependent pump, pulling dsDNA into and through the RuvAB complex. RuvB forms 2 homohexamers on either side of HJ DNA bound by 1 or 2 RuvA tetramers; 4 subunits per hexamer contact DNA at a time. Coordinated motions by a converter formed by DNA-disengaged RuvB subunits stimulates ATP hydrolysis and nucleotide exchange. Immobilization of the converter enables RuvB to convert the ATP-contained energy into a lever motion, pulling 2 nucleotides of DNA out of the RuvA tetramer per ATP hydrolyzed, thus driving DNA branch migration. The RuvB motors rotate together with the DNA substrate, which together with the progressing nucleotide cycle form the mechanistic basis for DNA recombination by continuous HJ branch migration. Branch migration allows RuvC to scan DNA until it finds its consensus sequence, where it cleaves and resolves cruciform DNA. This Orientia tsutsugamushi (strain Boryong) (Rickettsia tsutsugamushi) protein is Holliday junction branch migration complex subunit RuvB.